A 616-amino-acid polypeptide reads, in one-letter code: Chaperone protein HscA homolog (616 aa).

Belongs to the heat shock protein 70 family.

Functionally, chaperone involved in the maturation of iron-sulfur cluster-containing proteins. Has a low intrinsic ATPase activity which is markedly stimulated by HscB. This Vibrio cholerae serotype O1 (strain M66-2) protein is Chaperone protein HscA homolog.